The primary structure comprises 246 residues: Serine protease 1 (246 aa).

Residues 1–15 form the signal peptide; it reads MSALLILALVGAAVA. Residues 16–23 constitute a propeptide, activation peptide; that stretch reads FPLEDDDK. The Peptidase S1 domain occupies 24–244; the sequence is IVGGYTCPEH…FVGWIQDTIA (221 aa). Disulfide bonds link C30–C160, C48–C64, C132–C233, C139–C206, C171–C185, and C196–C220. H63 (charge relay system) is an active-site residue. Residues E75, N77, V80, and E85 each contribute to the Ca(2+) site. D107 (charge relay system) is an active-site residue. The Charge relay system role is filled by S200.

This sequence belongs to the peptidase S1 family. Interacts with SERPINA1. It depends on Ca(2+) as a cofactor.

It localises to the secreted. Its subcellular location is the extracellular space. It carries out the reaction Preferential cleavage: Arg-|-Xaa, Lys-|-Xaa.. The sequence is that of Serine protease 1 from Rattus norvegicus (Rat).